A 467-amino-acid polypeptide reads, in one-letter code: GTPase Der (467 aa).

EngA-type G domains follow at residues 25-188 (PVVA…PEAP) and 199-372 (RRVA…ASWE). Residues 31 to 38 (GRPNVGKS), 78 to 82 (DTGGW), 140 to 143 (NKAD), 205 to 212 (GRPNVGKS), 252 to 256 (DTAGL), and 317 to 320 (NKWD) each bind GTP. In terms of domain architecture, KH-like spans 373–455 (TRVPTAQLNA…PIEISVRARK (83 aa)).

It belongs to the TRAFAC class TrmE-Era-EngA-EngB-Septin-like GTPase superfamily. EngA (Der) GTPase family. As to quaternary structure, associates with the 50S ribosomal subunit.

Functionally, GTPase that plays an essential role in the late steps of ribosome biogenesis. The chain is GTPase Der from Salinispora tropica (strain ATCC BAA-916 / DSM 44818 / JCM 13857 / NBRC 105044 / CNB-440).